The following is a 492-amino-acid chain: GDP-fucose protein O-fucosyltransferase 4 (492 aa).

Residues 1–7 (MAAGPIR) are Cytoplasmic-facing. The chain crosses the membrane as a helical; Signal-anchor for type II membrane protein span at residues 8-24 (VVLVLLGVLSVCAASGH). Topologically, residues 25-492 (GSVAEREAGG…HEIFMKRQHL (468 aa)) are lumenal. Asn166 is a glycosylation site (N-linked (GlcNAc...) asparagine). A disulfide bridge connects residues Cys389 and Cys392. Residue Asn443 is glycosylated (N-linked (GlcNAc...) asparagine).

The protein belongs to the glycosyltransferase 10 family.

The protein localises to the endoplasmic reticulum membrane. The enzyme catalyses L-threonyl-[protein] + GDP-beta-L-fucose = 3-O-(alpha-L-fucosyl)-L-threonyl-[protein] + GDP + H(+). It carries out the reaction L-seryl-[protein] + GDP-beta-L-fucose = 3-O-(alpha-L-fucosyl)-L-seryl-[protein] + GDP + H(+). The protein operates within protein modification; protein glycosylation. Protein O-fucosyltransferase that specifically catalyzes O-fucosylation of serine or threonine residues in EMI domains of target proteins, such as MMRN1, MMRN2 and EMID1. Attaches fucose through an O-glycosidic linkage. O-fucosylation of EMI domain-containing proteins may be required for facilitating protein folding and secretion. Also shows minor alpha-(1,3)-fucosyltransferase activity toward activity toward biantennary N-glycan acceptors. However, this was tested with a library of synthetic substrates and this activity is unsure in vivo. The protein is GDP-fucose protein O-fucosyltransferase 4 of Homo sapiens (Human).